A 379-amino-acid chain; its full sequence is Inactive deoxyhypusine synthase (379 aa).

The tract at residues 1–48 is disordered; sequence MLASVPAPRPAKKDSAASRRKSASKSTGAAVKDGSSARVSASGAAESP. Residues 36 to 47 are compositionally biased toward low complexity; the sequence is SARVSASGAAES. NAD(+) is bound by residues 115–119, 141–143, Glu-147, and Asp-256; these read SNMIS and SAG. A spermidine-binding site is contributed by 146–147; the sequence is EE. Asp-261 serves as a coordination point for spermidine. Gly-302 serves as a coordination point for NAD(+). His-307 provides a ligand contact to spermidine. An NAD(+)-binding site is contributed by 323–324; that stretch reads TG. Spermidine contacts are provided by residues 329-331 and 338-344; these read GCV and DDVACGL. Residue 357 to 358 participates in NAD(+) binding; that stretch reads DA.

It belongs to the deoxyhypusine synthase family.

The chain is Inactive deoxyhypusine synthase from Leishmania donovani.